A 427-amino-acid polypeptide reads, in one-letter code: Type II methyltransferase M1.BsuMI (427 aa).

One can recognise an SAM-dependent MTase C5-type domain in the interval 84-427; the sequence is INIADLFSGC…SYLLALHQLR (344 aa). The active site involves C176.

It belongs to the class I-like SAM-binding methyltransferase superfamily. C5-methyltransferase family. In terms of assembly, monomer. May form a complex with YdiP, also seems to be active alone.

The catalysed reaction is a 2'-deoxycytidine in DNA + S-adenosyl-L-methionine = a 5-methyl-2'-deoxycytidine in DNA + S-adenosyl-L-homocysteine + H(+). Somewhat inhibited by MgCl(2) and spermidine, strongly inhibited by MnCl(2). In terms of biological role, a methylase, recognizes the double-stranded sequence 5'-YTCGAR-3', methylates C-3 on both strands, and protects the DNA from cleavage by the BsuMI endonuclease. This chain is Type II methyltransferase M1.BsuMI (ydiO), found in Bacillus subtilis (strain 168).